The primary structure comprises 270 residues: Calpain small subunit 1 (270 aa).

Residue methionine 1 is modified to N-acetylmethionine. At serine 6 the chain carries Phosphoserine. The EF-hand 1; atypical domain maps to 98 to 132; sequence EEERQFRKLFVQLAGDDMEVSATELMNILNKVVTR. Ca(2+) contacts are provided by alanine 111, aspartate 114, glutamate 116, glutamate 121, aspartate 139, aspartate 154, aspartate 156, threonine 158, lysine 160, and glutamate 165. EF-hand domains follow at residues 141–174, 171–206, 207–235, and 236–270; these read FGID…NNIK, NNIK…AGFH, LNQH…ISCL, and VRLD…TMYS. An N6-acetyllysine modification is found at lysine 181. Residues aspartate 184, aspartate 186, serine 188, threonine 190, glutamate 195, and aspartate 227 each coordinate Ca(2+).

Homodimer or heterodimer of a large (catalytic) and a small (regulatory) subunit. In presence of calcium, the heterodimer dissociates.

The protein localises to the cytoplasm. It localises to the cell membrane. Its function is as follows. Regulatory subunit of the calcium-regulated non-lysosomal thiol-protease which catalyzes limited proteolysis of substrates involved in cytoskeletal remodeling and signal transduction. Essential for embryonic development. The sequence is that of Calpain small subunit 1 (Capns1) from Rattus norvegicus (Rat).